The chain runs to 474 residues: Hydrogenobyrinate a,c-diamide synthase (474 aa).

The 191-residue stretch at 269 to 459 (VVAVAGGQAF…LHTHWAGCPQ (191 aa)) folds into the GATase cobBQ-type domain. Cys352 functions as the Nucleophile in the catalytic mechanism.

This sequence belongs to the CobB/CbiA family. Mg(2+) serves as cofactor.

The catalysed reaction is hydrogenobyrinate + 2 L-glutamine + 2 ATP + 2 H2O = hydrogenobyrinate a,c-diamide + 2 L-glutamate + 2 ADP + 2 phosphate + 2 H(+). The protein operates within cofactor biosynthesis; adenosylcobalamin biosynthesis; cob(II)yrinate a,c-diamide from precorrin-2 (aerobic route): step 9/10. Its function is as follows. Catalyzes the ATP-dependent amidation of the two carboxylate groups at positions a and c of hydrogenobyrinate, using either L-glutamine or ammonia as the nitrogen source. In Thermobifida fusca (strain YX), this protein is Hydrogenobyrinate a,c-diamide synthase.